The primary structure comprises 171 residues: AN1-type zinc finger protein 2A (171 aa).

2 AN1-type zinc fingers span residues 4-52 (PDLG…KKDV) and 94-142 (KVFT…SSVS). Zn(2+)-binding residues include Cys-10, Cys-15, Cys-25, Cys-28, Cys-33, His-36, His-42, Cys-44, Cys-100, Cys-105, Cys-115, Cys-118, Cys-123, His-126, His-132, and Cys-134. Residues 135-171 (QAGSSSVSRGRSSASRAAEQKPSGVSWLAQRLRRTVK) are disordered. Over residues 136 to 151 (AGSSSVSRGRSSASRA) the composition is skewed to low complexity.

It is found in the cytoplasm. Its subcellular location is the nucleus. The sequence is that of AN1-type zinc finger protein 2A (Zfand2a) from Rattus norvegicus (Rat).